We begin with the raw amino-acid sequence, 1219 residues long: ATP-dependent helicase/nuclease subunit A (1219 aa).

The UvrD-like helicase ATP-binding domain maps to 12–477 (TRWTDNQWKS…IDLSQNFRSR (466 aa)). 33–40 (AAAGSGKT) serves as a coordination point for ATP. One can recognise a UvrD-like helicase C-terminal domain in the interval 478–786 (EEVLTTTNYL…RMMTIHSSKG (309 aa)). A disordered region spans residues 997–1016 (PSKQSVSELKRQHETEQSDT). Residues 1004–1016 (ELKRQHETEQSDT) are compositionally biased toward basic and acidic residues.

This sequence belongs to the helicase family. AddA subfamily. Heterodimer of AddA and AddB/RexB. It depends on Mg(2+) as a cofactor.

It carries out the reaction Couples ATP hydrolysis with the unwinding of duplex DNA by translocating in the 3'-5' direction.. The enzyme catalyses ATP + H2O = ADP + phosphate + H(+). Functionally, the heterodimer acts as both an ATP-dependent DNA helicase and an ATP-dependent, dual-direction single-stranded exonuclease. Recognizes the chi site generating a DNA molecule suitable for the initiation of homologous recombination. The AddA nuclease domain is required for chi fragment generation; this subunit has the helicase and 3' -&gt; 5' nuclease activities. The protein is ATP-dependent helicase/nuclease subunit A of Staphylococcus saprophyticus subsp. saprophyticus (strain ATCC 15305 / DSM 20229 / NCIMB 8711 / NCTC 7292 / S-41).